Consider the following 186-residue polypeptide: Ribosome-recycling factor (186 aa).

This sequence belongs to the RRF family.

It localises to the cytoplasm. Responsible for the release of ribosomes from messenger RNA at the termination of protein biosynthesis. May increase the efficiency of translation by recycling ribosomes from one round of translation to another. This Brucella melitensis biotype 2 (strain ATCC 23457) protein is Ribosome-recycling factor.